A 154-amino-acid polypeptide reads, in one-letter code: Ribosomal RNA large subunit methyltransferase H (154 aa).

Residues G103 and 122–127 (FSKLTF) each bind S-adenosyl-L-methionine.

This sequence belongs to the RNA methyltransferase RlmH family. Homodimer.

It is found in the cytoplasm. The enzyme catalyses pseudouridine(1915) in 23S rRNA + S-adenosyl-L-methionine = N(3)-methylpseudouridine(1915) in 23S rRNA + S-adenosyl-L-homocysteine + H(+). Its function is as follows. Specifically methylates the pseudouridine at position 1915 (m3Psi1915) in 23S rRNA. This chain is Ribosomal RNA large subunit methyltransferase H, found in Caldicellulosiruptor saccharolyticus (strain ATCC 43494 / DSM 8903 / Tp8T 6331).